We begin with the raw amino-acid sequence, 171 residues long: Large ribosomal subunit protein uL10 (171 aa).

The protein belongs to the universal ribosomal protein uL10 family. In terms of assembly, part of the ribosomal stalk of the 50S ribosomal subunit. The N-terminus interacts with L11 and the large rRNA to form the base of the stalk. The C-terminus forms an elongated spine to which L12 dimers bind in a sequential fashion forming a multimeric L10(L12)X complex.

Forms part of the ribosomal stalk, playing a central role in the interaction of the ribosome with GTP-bound translation factors. This Lactococcus lactis subsp. lactis (strain IL1403) (Streptococcus lactis) protein is Large ribosomal subunit protein uL10 (rplJ).